Consider the following 497-residue polypeptide: Glycogen synthase (497 aa).

An ADP-alpha-D-glucose-binding site is contributed by K15.

It belongs to the glycosyltransferase 1 family. Bacterial/plant glycogen synthase subfamily.

The catalysed reaction is [(1-&gt;4)-alpha-D-glucosyl](n) + ADP-alpha-D-glucose = [(1-&gt;4)-alpha-D-glucosyl](n+1) + ADP + H(+). Its pathway is glycan biosynthesis; glycogen biosynthesis. Synthesizes alpha-1,4-glucan chains using ADP-glucose. The polypeptide is Glycogen synthase (Thermodesulfovibrio yellowstonii (strain ATCC 51303 / DSM 11347 / YP87)).